The chain runs to 355 residues: Probable dual-specificity RNA methyltransferase RlmN 1 (355 aa).

E91 serves as the catalytic Proton acceptor. The 238-residue stretch at 99–336 (RADRAAGCLS…THLRRSRGPD (238 aa)) folds into the Radical SAM core domain. C106 and C341 form a disulfide bridge. Residues C113, C117, and C120 each coordinate [4Fe-4S] cluster. Residues 163-164 (GE), S195, 218-220 (SLH), and N294 each bind S-adenosyl-L-methionine. The S-methylcysteine intermediate role is filled by C341.

It belongs to the radical SAM superfamily. RlmN family. It depends on [4Fe-4S] cluster as a cofactor.

Its subcellular location is the cytoplasm. The enzyme catalyses adenosine(2503) in 23S rRNA + 2 reduced [2Fe-2S]-[ferredoxin] + 2 S-adenosyl-L-methionine = 2-methyladenosine(2503) in 23S rRNA + 5'-deoxyadenosine + L-methionine + 2 oxidized [2Fe-2S]-[ferredoxin] + S-adenosyl-L-homocysteine. It catalyses the reaction adenosine(37) in tRNA + 2 reduced [2Fe-2S]-[ferredoxin] + 2 S-adenosyl-L-methionine = 2-methyladenosine(37) in tRNA + 5'-deoxyadenosine + L-methionine + 2 oxidized [2Fe-2S]-[ferredoxin] + S-adenosyl-L-homocysteine. In terms of biological role, specifically methylates position 2 of adenine 2503 in 23S rRNA and position 2 of adenine 37 in tRNAs. The protein is Probable dual-specificity RNA methyltransferase RlmN 1 of Opitutus terrae (strain DSM 11246 / JCM 15787 / PB90-1).